Reading from the N-terminus, the 415-residue chain is L-cysteine:1D-myo-inositol 2-amino-2-deoxy-alpha-D-glucopyranoside ligase (415 aa).

Cysteine 43 is a Zn(2+) binding site. L-cysteinyl-5'-AMP-binding positions include 43–46, threonine 58, and 81–83; these read CGIT and NVT. Residues 45-55 carry the 'HIGH' region motif; sequence ITPYDATHLGH. The 'ERGGDP' region signature appears at 188-193; the sequence is ERGGDP. Position 229 (tryptophan 229) interacts with L-cysteinyl-5'-AMP. Position 233 (cysteine 233) interacts with Zn(2+). 251 to 253 lines the L-cysteinyl-5'-AMP pocket; that stretch reads GSD. Zn(2+) is bound at residue histidine 258. L-cysteinyl-5'-AMP is bound at residue valine 285. The 'KMSKS' region motif lies at 291-295; that stretch reads KMSKS.

The protein belongs to the class-I aminoacyl-tRNA synthetase family. MshC subfamily. In terms of assembly, monomer. It depends on Zn(2+) as a cofactor.

The catalysed reaction is 1D-myo-inositol 2-amino-2-deoxy-alpha-D-glucopyranoside + L-cysteine + ATP = 1D-myo-inositol 2-(L-cysteinylamino)-2-deoxy-alpha-D-glucopyranoside + AMP + diphosphate + H(+). Catalyzes the ATP-dependent condensation of GlcN-Ins and L-cysteine to form L-Cys-GlcN-Ins. The sequence is that of L-cysteine:1D-myo-inositol 2-amino-2-deoxy-alpha-D-glucopyranoside ligase from Cellulomonas flavigena (strain ATCC 482 / DSM 20109 / BCRC 11376 / JCM 18109 / NBRC 3775 / NCIMB 8073 / NRS 134).